The chain runs to 667 residues: mRNA cap guanine-N(7) methyltransferase (667 aa).

A compositionally biased stretch (basic and acidic residues) spans 1-19; it reads MYDPARDSWEERDGDEARS. The tract at residues 1–272 is disordered; that stretch reads MYDPARDSWE…RRRQEERERA (272 aa). A compositionally biased stretch (polar residues) spans 33–52; it reads FSSSEQIYGASGENNNTTDL. The segment covering 72-87 has biased composition (low complexity); it reads SPPAQSTTQTPPSIST. Polar residues predominate over residues 88-128; it reads HVQSPVNPAAQEASNTQSLTSAAQNQSNKSTTTMDNTSGSA. Residues 132–142 are compositionally biased toward basic and acidic residues; the sequence is PRADPSDKSNR. Polar residues predominate over residues 147 to 156; it reads ASPTDQNGSQ. Basic and acidic residues predominate over residues 256 to 272; the sequence is LVDRETLRRRQEERERA. Residues 309 to 667 form the mRNA cap 0 methyltransferase domain; that stretch reads SKIKGLRSFN…FYHAFCFYKV (359 aa). MRNA is bound at residue 318–319; the sequence is NN. Residues lysine 322, glycine 365, aspartate 389, aspartate 427, 470 to 472, and tyrosine 475 each bind S-adenosyl-L-methionine; that span reads MFT. Basic and acidic residues predominate over residues 521 to 535; the sequence is KKERQSQAKKEKTDE. A disordered region spans residues 521-547; sequence KKERQSQAKKEKTDEAPEDGEVEEDDG. Acidic residues predominate over residues 536–547; sequence APEDGEVEEDDG.

Belongs to the class I-like SAM-binding methyltransferase superfamily. mRNA cap 0 methyltransferase family.

Its subcellular location is the nucleus. The catalysed reaction is a 5'-end (5'-triphosphoguanosine)-ribonucleoside in mRNA + S-adenosyl-L-methionine = a 5'-end (N(7)-methyl 5'-triphosphoguanosine)-ribonucleoside in mRNA + S-adenosyl-L-homocysteine. Its function is as follows. Responsible for methylating the 5'-cap structure of mRNAs. This chain is mRNA cap guanine-N(7) methyltransferase (abd1), found in Neosartorya fischeri (strain ATCC 1020 / DSM 3700 / CBS 544.65 / FGSC A1164 / JCM 1740 / NRRL 181 / WB 181) (Aspergillus fischerianus).